The primary structure comprises 2623 residues: MTQNIDNNNNKLIRDRNDDDDVDRNDDGDVAVIGIGLRFPSGNLKESISKPNQLFNELLNGLDGIVSTSERWSDNYYLNGEIVSKFAGLLPLDEWKQFDPIFFAINQTYDNVSSIDPQQRLLLKCVWEALEDSGIDPISLRGTNTSTFIGNSTIDYYNLQRSPSETQNNIFGSSTHSIANRIGYCFDFRGENLTIDTACSSSSNAINCGYNSIKTNRSNVSIVGGVNIILDPHISKSFTQLDMLSPTGKCHTFSSDADGFVRSEGVGIVVLKKLKDAIKDSNNIYCVIKGSSSNIDGNFDKLNFYSPSKSSQCENIKLAIKSTNGQINESDIDYCETHGTGTPTGDPIELEGISRVFNSAKIPSTTINNNKQVLVGSIKSNIGHLEACSGVASLIKCCLMFKNKLFLQNINFKEPNPLINFKEWGLKVVTEPIKFNENKSTVMLVNNFGITGSNVCLILSELKKNHHNRYENEYHKIEIDSKVNEKKKYLIPLSSNSSTSLNNYKSSIIKLSNSNSSPTTTTSFKELVHNQIKFKSTSLIQKSVIIASDWNEFQDENNQIKLENSDNLISNITVEKKKSPITVMVLCGQGSQYNKMALSLYDNEPIFRESVNRFDKELFKYYGYSVLDKLRSIDDKDLISIHQPILAQPANVIIQVSLYELYKHWGVSADIIIGHSLGEVSSPYCSGMIDFQTLCYLIYHRSVAQNRTTGTGRMLSVNISSDEFINNYQSTTKYESLEIACYNSPTSIVIAGREDLLNEITNEFKSNNIFCTMLGLLSSFHTSSQQMIKDEVCSLNISSKQPSIAVFSTVTTNLFNHQSLPFNADYAFENIRQPVRFTQTITNLYKHIESNDMGNEITFIEVSPHPTLQYYLNQMKSTQSSYFNNGKNITIYSPLNKKKNDYNEFLKTISLLYVNNNFDINFKSQLINDNNNISNTTKLNNLPLYQWDDKEYFKIASFHEKIKSEGPSIHSLGNNTDSPYPSYQTFIDIKKSPFQWLKGHQVSDKFYYPGMGYVHNLLSIYPNQDITISSLEFKSPLVLTEGNNQCLQTTIAPLSKNEFNIKSHYKDQKTNQWILSSLGNFNLTKHNSIISNKLINIQSLKDKCNFTSISKQDFYETIRIKTNLTYKGLFQGVKQCYIGNNCSLSIVSLNEIYNQKEYNHLINNSNMNKFLNTAILDTCLHGSLVAVTQPVVLDRIEGFKYYFSNIPSLNENNNNDDIKELYVFSDIKPRTNYQTYSISVKIILPNGTLLVDISNVVCALVSLGSNPDSTIICKPPLNDIYTPYLQSKDSVVNKPEQFKHLYSVDEFSVNEEDNQFISNELLLSLFYKHINNRCPSINLESLTTLEYNQFKQLYYNSLVNENLFKFIFENLKRYSNILNHDNNQSNIKPKIEKIFIRTTKIMAKQLFPLKDDDSITDTPQSLFESGFLDDFYKNSRVVQPLNNLLSEIIVETLKPILNEPIVFRILEAGGGTGSLSLLILEKICKLLNDNSTTSIINIEFTWSDVSASFFAEIKEKFSSFTNHNNLNIIYRVLDLEKPLLDQDLKASYYDFVVMSNVMHVVKKLKPTLNEIHNILTPNGQLLYIEPPYKSFYFDSIFGCFSQWWPSSDGDIELRPDRCCMKQEKWVNLLSQCNYRDTIMSGNDNLLFLIQTRKPTINEIISEQSISLDQLNSFNNIILFSNNKNRNSCSSSILDLIRLNQELKHKIININNYNEFQSWITNNQNKDNCNKSLIIFLKSIESTMNTSNFKEITFEYIQINQLILKLELSNNFKHLLLSLNSTTDNYLSSSIIGAARYFVEFPQLDLYILNYDNVSIENNQQLSLINYLINPNNNIQKEFTINNNKVYYERYCRRSNNIKSKFQSESFETNKDNLYIQLNSNIEYQLYSKKDELNSNEVEIEVKATGINYKDYLMYIGMIGSDLDIKYGKEIEYGIGIDNPKIGNDFSGIITRLGSNVKKFKVGDQVCGFGSKTNSSHVIIDFNSIYYKPLNCSHSVSASIPSIYITTLHSIYSIGNLKSNESILIHSAAGGIGISSLDLLKSKQHQGYIFLTVGSKDKEEYLINKYGSLITAIYSSRNKDYVYEIKNKLIELGVVEQHQQGVDLILNTLSSEYMDSNFQCLNLSGRIVDLSITHLTPNDYMTNNHYKFNMNYGNVDIEDFPSKLIKRYLKKIIKMINSNKLELSVPIIEYSNNQFKDAIEYINQRKHIGKIIVNHNQDEFNRVYNNYQSNNNQIIMKHSYDISKLNIGKNILLTGQTGIVLEILKYLIKYSNHSIENIIILSKSKLKWELKLLINQSKFKKDNNIKFHFNQIDIEDSNKVNQVLNQLELNENITNIDSIIHFAFMIDIGDVQQVDMNRLNNAHGAKTIGAINLHNQSINRSWNIKQFIMASSVVSIFGSDQQCCYVSACSVIDSLSKYRHSIGLPSLAINLGAISSTGFVSRNNAIETMFKSSIVNLFSPQLVISSLDLFIQNQHQYPNYCLSDFNFEVLTPTLTNQYHSKFDYQINIVKKSNRIKSFSSGNSGANNEIIHSTILNKISELLSIDESKINEDLQLSQYGMDSLVIVQLKNFIDNQLGHNIITIQQLQNNKINQSIEIIKSAKNNNKNNNNNNNKNNSNNKNKNN.

The span at 1-11 (MTQNIDNNNNK) shows a compositional bias: low complexity. The interval 1–25 (MTQNIDNNNNKLIRDRNDDDDVDRN) is disordered. The Ketosynthase family 3 (KS3) domain occupies 27–461 (DGDVAVIGIG…GSNVCLILSE (435 aa)). Residues Cys-199, His-338, and His-384 each act as for beta-ketoacyl synthase activity in the active site. The segment at 666-699 (GVSADIIIGHSLGEVSSPYCSGMIDFQTLCYLIY) is acyl/malonyl transferase. The active-site For acyl/malonyl transferase activity is Ser-676. Residues 959–1088 (HEKIKSEGPS…GNFNLTKHNS (130 aa)) are N-terminal hotdog fold. In terms of domain architecture, PKS/mFAS DH spans 959 to 1267 (HEKIKSEGPS…CALVSLGSNP (309 aa)). His-1000 (proton acceptor; for dehydratase activity) is an active-site residue. Residues 1105–1267 (NFTSISKQDF…CALVSLGSNP (163 aa)) form a C-terminal hotdog fold region. Asp-1177 functions as the Proton donor; for dehydratase activity in the catalytic mechanism. The Carrier domain occupies 2524 to 2601 (ANNEIIHSTI…QSIEIIKSAK (78 aa)). Position 2561 is an O-(pantetheine 4'-phosphoryl)serine (Ser-2561). Residues 2600–2623 (AKNNNKNNNNNNNKNNSNNKNKNN) form a disordered region. Low complexity predominate over residues 2601-2623 (KNNNKNNNNNNNKNNSNNKNKNN).

Pantetheine 4'-phosphate is required as a cofactor.

Its function is as follows. Probable polyketide synthase. This Dictyostelium discoideum (Social amoeba) protein is Probable polyketide synthase 31 (pks31).